A 266-amino-acid polypeptide reads, in one-letter code: Zinc transporter ZupT (266 aa).

A run of 8 helical transmembrane segments spans residues 8-28 (LLLTLLAGLSTGIGSAMALAV), 36-56 (LALSLGFSAGIMLYVSFMEII), 71-91 (AGAWVSTISFFGGMLFTWAID), 123-143 (GIFTAAAIAIHNFPEGMAVFF), 152-172 (GIVIASTIALHNIPEGMAVAV), 185-205 (FSLSFLSGLAEPLGALVGYTL), 209-229 (FLTPFVLGIVLASVSGIMVYI), and 246-266 (LAITGLIAGMAVMALSLLLLT). Positions 134 and 137 each coordinate Fe(2+). Zn(2+) is bound by residues glutamate 137 and histidine 162. Positions 163, 166, and 195 each coordinate Fe(2+). Position 166 (glutamate 166) interacts with Zn(2+).

Belongs to the ZIP transporter (TC 2.A.5) family. ZupT subfamily.

It localises to the cell inner membrane. The enzyme catalyses Zn(2+)(in) = Zn(2+)(out). Its function is as follows. Mediates zinc uptake. May also transport other divalent cations. This Chlorobium luteolum (strain DSM 273 / BCRC 81028 / 2530) (Pelodictyon luteolum) protein is Zinc transporter ZupT.